Here is a 131-residue protein sequence, read N- to C-terminus: Maturin (131 aa).

The residue at position 34 (Tyr-34) is a Phosphotyrosine. Residues 107 to 120 show a composition bias toward acidic residues; sequence FEEYSADVEEEEPE. The disordered stretch occupies residues 107–131; it reads FEEYSADVEEEEPEADHPQMGVSQQ.

Belongs to the MTURN family. Post-translationally, phosphorylation at Tyr-34 is essential for its ability to promote megakaryocyte differentiation.

It localises to the cytoplasm. Its function is as follows. Promotes megakaryocyte differentiation by enhancing ERK and JNK signaling as well as up-regulating RUNX1 and FLI1 expression. Represses NF-kappa-B transcriptional activity by inhibiting phosphorylation of RELA at 'Ser- 536'. May be involved in early neuronal development. The protein is Maturin (MTURN) of Bos taurus (Bovine).